Consider the following 98-residue polypeptide: Ubiquitin-related modifier 1 (98 aa).

1-thioglycine is present on Gly98. Gly98 participates in a covalent cross-link: Glycyl lysine isopeptide (Gly-Lys) (interchain with K-? in acceptor proteins).

It belongs to the URM1 family. Post-translationally, C-terminal thiocarboxylation occurs in 2 steps, it is first acyl-adenylated (-COAMP) via the hesA/moeB/thiF part of UBA4, then thiocarboxylated (-COSH) via the rhodanese domain of UBA4.

It localises to the cytoplasm. The protein operates within tRNA modification; 5-methoxycarbonylmethyl-2-thiouridine-tRNA biosynthesis. In terms of biological role, acts as a sulfur carrier required for 2-thiolation of mcm(5)S(2)U at tRNA wobble positions of cytosolic tRNA(Lys), tRNA(Glu) and tRNA(Gln). Serves as sulfur donor in tRNA 2-thiolation reaction by being thiocarboxylated (-COSH) at its C-terminus by the MOCS3 homolog UBA4. The sulfur is then transferred to tRNA to form 2-thiolation of mcm(5)S(2)U. Prior mcm(5) tRNA modification by the elongator complex is required for 2-thiolation. Also acts as a ubiquitin-like protein (UBL) that is covalently conjugated via an isopeptide bond to lysine residues of target proteins such as AHP1. The thiocarboxylated form serves as substrate for conjugation and oxidative stress specifically induces the formation of UBL-protein conjugates. This is Ubiquitin-related modifier 1 from Candida glabrata (strain ATCC 2001 / BCRC 20586 / JCM 3761 / NBRC 0622 / NRRL Y-65 / CBS 138) (Yeast).